We begin with the raw amino-acid sequence, 120 residues long: UPF0102 protein CbuK_0265 (120 aa).

The protein belongs to the UPF0102 family.

This Coxiella burnetii (strain CbuK_Q154) (Coxiella burnetii (strain Q154)) protein is UPF0102 protein CbuK_0265.